The primary structure comprises 197 residues: MSINVKSVIEAALFIAGNEGVHKDKLKSISRLSVQDFEAVMEEMIFEYEKDPQRGLVVRKVGENYKLFTKPDISKIVASGFGIKQKNPLNQGMIETLAIIAYNHPCTRSQIHELRKTDPTPMLEKLIEIGLVEEAGRSEAVGKPYLYQVTPKFYDIFGLDSIKDLPEIVLPEQKIEELTYEEEINFFDTNREDNGDE.

It belongs to the ScpB family. Homodimer. Homodimerization may be required to stabilize the binding of ScpA to the Smc head domains. Component of a cohesin-like complex composed of ScpA, ScpB and the Smc homodimer, in which ScpA and ScpB bind to the head domain of Smc. The presence of the three proteins is required for the association of the complex with DNA.

It localises to the cytoplasm. Its function is as follows. Participates in chromosomal partition during cell division. May act via the formation of a condensin-like complex containing Smc and ScpA that pull DNA away from mid-cell into both cell halves. The protein is Segregation and condensation protein B of Malacoplasma penetrans (strain HF-2) (Mycoplasma penetrans).